A 197-amino-acid polypeptide reads, in one-letter code: Guanylate kinase (197 aa).

The Guanylate kinase-like domain occupies 9 to 188 (GRLVVFSAPS…AVEAVILAIS (180 aa)). 16–23 (APSGTGKS) contributes to the ATP binding site.

The protein belongs to the guanylate kinase family.

Its subcellular location is the cytoplasm. It carries out the reaction GMP + ATP = GDP + ADP. Essential for recycling GMP and indirectly, cGMP. The chain is Guanylate kinase from Chlorobium luteolum (strain DSM 273 / BCRC 81028 / 2530) (Pelodictyon luteolum).